We begin with the raw amino-acid sequence, 338 residues long: MTKQKVAILGPGSWGTALSQVLNDNGHDVRLWGNISDQIEEINTKHTNRHYFKDIVLDKNITATLDLGQALSDVDAVLFVVPTKVTRLVARQVAAILDHKVVVMHASKGLEPETHERLSTILEEEIPAHFRSEVVVVSGPSHAEETIVRDITLITAASKDIEAAKYVQSLFSNHYFRLYTNTDVIGVETAGALKNIIAVGAGALHGLGYGDNAKAAVITRGLAEITRLGVKLGADPLTYSGLSGVGDLIVTGTSVHSRNWRAGAALGRGEKLEDIERNMGMVIEGIATTKVAYEIAQDLGVYMPITTAIYKSIYEGADIKESILGMMSNEFRSENEWH.

NADPH-binding residues include S13, W14, and K108. The sn-glycerol 3-phosphate site is built by K108, G139, and S141. Residue A143 participates in NADPH binding. Positions 194, 247, 257, 258, and 259 each coordinate sn-glycerol 3-phosphate. The Proton acceptor role is filled by K194. R258 contributes to the NADPH binding site. Residues V282 and E284 each contribute to the NADPH site.

This sequence belongs to the NAD-dependent glycerol-3-phosphate dehydrogenase family.

The protein resides in the cytoplasm. It carries out the reaction sn-glycerol 3-phosphate + NAD(+) = dihydroxyacetone phosphate + NADH + H(+). The catalysed reaction is sn-glycerol 3-phosphate + NADP(+) = dihydroxyacetone phosphate + NADPH + H(+). It functions in the pathway membrane lipid metabolism; glycerophospholipid metabolism. In terms of biological role, catalyzes the reduction of the glycolytic intermediate dihydroxyacetone phosphate (DHAP) to sn-glycerol 3-phosphate (G3P), the key precursor for phospholipid synthesis. The chain is Glycerol-3-phosphate dehydrogenase [NAD(P)+] from Streptococcus pyogenes serotype M2 (strain MGAS10270).